The following is a 299-amino-acid chain: Methionyl-tRNA formyltransferase (299 aa).

(6S)-5,6,7,8-tetrahydrofolate is bound at residue 109–112; that stretch reads SLLP.

It belongs to the Fmt family.

It catalyses the reaction L-methionyl-tRNA(fMet) + (6R)-10-formyltetrahydrofolate = N-formyl-L-methionyl-tRNA(fMet) + (6S)-5,6,7,8-tetrahydrofolate + H(+). In terms of biological role, attaches a formyl group to the free amino group of methionyl-tRNA(fMet). The formyl group appears to play a dual role in the initiator identity of N-formylmethionyl-tRNA by promoting its recognition by IF2 and preventing the misappropriation of this tRNA by the elongation apparatus. The protein is Methionyl-tRNA formyltransferase of Wolbachia pipientis subsp. Culex pipiens (strain wPip).